Reading from the N-terminus, the 140-residue chain is MSKRGRGGSSGAKFRISLGLPVGAVINCADNTGAKNLYIISVKGIKGQLNRLPAAGVGDMVMATVKKGKPELRKKVHPAVVIRQRKSYRRKDGVFLYFEDNAGVIVNNKGEMKGSAITGPVAKECADLWPRIASNAGSIA.

The residue at position 17 (Ser17) is a Phosphoserine. Position 38 is a phosphotyrosine (Tyr38).

The protein belongs to the universal ribosomal protein uL14 family. In terms of assembly, component of the large ribosomal subunit.

Its subcellular location is the cytoplasm. Functionally, component of the large ribosomal subunit. The ribosome is a large ribonucleoprotein complex responsible for the synthesis of proteins in the cell. This chain is Large ribosomal subunit protein uL14 (RPL23), found in Pongo abelii (Sumatran orangutan).